The sequence spans 100 residues: NAD(P)H-quinone oxidoreductase subunit 4L, chloroplastic (100 aa).

Transmembrane regions (helical) follow at residues 1–21 (MLEH…YGLV), 31–51 (MCLE…SNFF), and 63–83 (IFVI…VLAI).

The protein belongs to the complex I subunit 4L family. As to quaternary structure, NDH is composed of at least 16 different subunits, 5 of which are encoded in the nucleus.

It is found in the plastid. It localises to the chloroplast thylakoid membrane. It catalyses the reaction a plastoquinone + NADH + (n+1) H(+)(in) = a plastoquinol + NAD(+) + n H(+)(out). It carries out the reaction a plastoquinone + NADPH + (n+1) H(+)(in) = a plastoquinol + NADP(+) + n H(+)(out). NDH shuttles electrons from NAD(P)H:plastoquinone, via FMN and iron-sulfur (Fe-S) centers, to quinones in the photosynthetic chain and possibly in a chloroplast respiratory chain. The immediate electron acceptor for the enzyme in this species is believed to be plastoquinone. Couples the redox reaction to proton translocation, and thus conserves the redox energy in a proton gradient. This is NAD(P)H-quinone oxidoreductase subunit 4L, chloroplastic from Cryptomeria japonica (Japanese cedar).